We begin with the raw amino-acid sequence, 304 residues long: Putative metal ion transporter ZIPCO (304 aa).

Helical transmembrane passes span 1–21, 46–66, 74–94, 158–178, 183–203, 218–238, 243–263, and 275–295; these read MWLK…VIYL, VASG…VIGL, IYCC…TDIL, FFIV…IGSL, PIII…LMIY, IYAW…VLSF, FVEI…SFNM, and FYIS…MIVF.

The protein resides in the cell membrane. Putative transporter for the divalent zinc and iron cations. Required for the development of liver-stage parasites. This chain is Putative metal ion transporter ZIPCO, found in Plasmodium berghei (strain Anka).